Consider the following 437-residue polypeptide: MQLPRWWELGDPCAWTGQGRGTRRMSPATTGTFLLTVYSIFSKVHSDRNVYPSAGVLFVHVLEREYFKGEFPPYPKPGEISNDPITFNTNLMGYPDRPGWLRYIQRTPYSDGVLYGSPTAENVGKPTIIEITAYNRRTFETARHNLIINVMSAEDFPLPYQAEFFIKNMNVEEMLASEVLGDFLGAVKNVWQPERLNAINITSALDRGGRVPLPINDLKEGVYVMVGADVPFSSCLREVENPQNQLRCSQEMEPVITCDKKFRTQFYIDWCKISLVDKTKQVSTYQEVIRGEGILPDGGEYKPPSDSLKSRDYYTDFLITLAVPSAVALVLFLILAYIMCCRREGVEKRNMQTPDIQLVHHSAIQKSTKELRDMSKNREIAWPLSTLPVFHPVTGEMIPPLHTDNYDSTNMPLMQTQQNLPHQTQIPQQQTTGKWYP.

At 1–317 (MQLPRWWELG…LKSRDYYTDF (317 aa)) the chain is on the extracellular side. Residue Asn200 is glycosylated (N-linked (GlcNAc...) asparagine). The helical transmembrane segment at 318–338 (LITLAVPSAVALVLFLILAYI) threads the bilayer. Topologically, residues 339–437 (MCCRREGVEK…QQQTTGKWYP (99 aa)) are cytoplasmic.

The protein belongs to the sarcoglycan alpha/epsilon family. Post-translationally, N-glycosylated. In terms of processing, ubiquitinated, leading to its degradation by the proteasome.

Its subcellular location is the cell membrane. It localises to the sarcolemma. The protein resides in the cytoplasm. The protein localises to the cytoskeleton. It is found in the cell projection. Its subcellular location is the dendrite. It localises to the golgi apparatus. Functionally, component of the sarcoglycan complex, a subcomplex of the dystrophin-glycoprotein complex which forms a link between the F-actin cytoskeleton and the extracellular matrix. In Pongo abelii (Sumatran orangutan), this protein is Epsilon-sarcoglycan.